The chain runs to 735 residues: Protostadienol synthase helA (735 aa).

A PFTB 1 repeat occupies 132–173; it reads KQEMCRYLLNVVNEDGGWGLFIQSPSTVFGTVMNYCMLRILG. The active-site Proton donor is Asp463. PFTB repeat units lie at residues 490-531, 567-607, and 616-663; these read LQQA…YENV, LSRS…ACMG, and CQRA…AVIG.

The protein belongs to the terpene cyclase/mutase family.

It carries out the reaction (S)-2,3-epoxysqualene = (17Z)-protosta-17(20),24-dien-3beta-ol. Its pathway is mycotoxin biosynthesis. Functionally, protostadienol synthase; part of the gene cluster that mediates the biosynthesis of helvolic acid, an antibacterial nortriterpenoid. Protostadienol synthase helA cyclizes (3S)-oxidosqualene to (17Z)-protosta-17(20),24-dien-3-beta-ol (protostadienol). The synthesis of protostadienol is followed by several steps of monooxygenation, dehydrogenation, and acyl transfer to yield the final helvolic acid. Following the cyclization to the tetracyclic protostadienol by helA, cytochrome P450 monooxygenases helB1-mediated and helB2-mediated oxidation at C-4 and C-16, acyltransferase helD2-dependent acetylation of 16-OH, oxidation of C-21 by cytochrome P450 monooxygenase helB4, and short chain dehydrogenase helC-dependent oxidative decarboxylation yield the fusidane skeleton. This intermediate is further modified in three additional steps mediated by the cytochrome P450 monooxygenase helB3, the acyltransferase helD1, and the 3-ketosteroid 1-dehydrogenase helE to give helvolic acid. Compared with the late stages in the biosynthesis of helvolic acid, enzymes involved in the early stage modifications act in a relatively strict order. The hydroxylation of C-16 by helB1 and subsequent acetylation by helD2 should occur before the helB3-mediated oxidation of C-21. C-4 demethylation in fusidane-type antibiotics proceeds in an unusual manner though it is also achieved by oxidative decarboxylation. The methyl group at C-4 beta position is oxidized by helB1 and subsequently removed by the short chain dehydrogenase helC. The sequence is that of Protostadienol synthase helA from Aspergillus fumigatus (strain ATCC MYA-4609 / CBS 101355 / FGSC A1100 / Af293) (Neosartorya fumigata).